The chain runs to 102 residues: Small ribosomal subunit protein uS10 (102 aa).

It belongs to the universal ribosomal protein uS10 family. Part of the 30S ribosomal subunit.

Functionally, involved in the binding of tRNA to the ribosomes. This is Small ribosomal subunit protein uS10 from Rhizobium etli (strain CIAT 652).